Reading from the N-terminus, the 318-residue chain is Ubiquitin-like domain-containing CTD phosphatase 1 (318 aa).

Residue alanine 2 is modified to N-acetylalanine. Positions 3–81 (LPIIVKWGGQ…IMMMGTREES (79 aa)) constitute a Ubiquitin-like domain. Lysine 117 bears the N6-acetyllysine mark. The FCP1 homology domain maps to 133 to 294 (PREGKKLLVL…LKLTQYLKEI (162 aa)). Positions 143, 145, and 253 each coordinate Mg(2+).

Mg(2+) serves as cofactor.

It localises to the nucleus. It carries out the reaction O-phospho-L-seryl-[protein] + H2O = L-seryl-[protein] + phosphate. The catalysed reaction is O-phospho-L-threonyl-[protein] + H2O = L-threonyl-[protein] + phosphate. Dephosphorylates 26S nuclear proteasomes, thereby decreasing their proteolytic activity. Recruited to the 19S regulatory particle of the 26S proteasome through its interaction with 19S component PSMD2/RPN1. Once recruited, dephosphorylates 19S component PSMC2/RPT1 which impairs PSMC2 ATPase activity and disrupts 26S proteasome assembly. Has also been reported to stimulate the proteolytic activity of the 26S proteasome. This Pongo abelii (Sumatran orangutan) protein is Ubiquitin-like domain-containing CTD phosphatase 1 (UBLCP1).